The primary structure comprises 130 residues: Large ribosomal subunit protein bL12 (130 aa).

This sequence belongs to the bacterial ribosomal protein bL12 family. In terms of assembly, homodimer. Part of the ribosomal stalk of the 50S ribosomal subunit. Forms a multimeric L10(L12)X complex, where L10 forms an elongated spine to which 2 to 4 L12 dimers bind in a sequential fashion. Binds GTP-bound translation factors.

Its function is as follows. Forms part of the ribosomal stalk which helps the ribosome interact with GTP-bound translation factors. Is thus essential for accurate translation. The polypeptide is Large ribosomal subunit protein bL12 (Chlamydia trachomatis serovar L2 (strain ATCC VR-902B / DSM 19102 / 434/Bu)).